The sequence spans 272 residues: Orotidine 5'-phosphate decarboxylase (272 aa).

The active-site Proton donor is Lys95.

Belongs to the OMP decarboxylase family. Type 2 subfamily.

The catalysed reaction is orotidine 5'-phosphate + H(+) = UMP + CO2. Its pathway is pyrimidine metabolism; UMP biosynthesis via de novo pathway; UMP from orotate: step 2/2. The polypeptide is Orotidine 5'-phosphate decarboxylase (Cupriavidus metallidurans (strain ATCC 43123 / DSM 2839 / NBRC 102507 / CH34) (Ralstonia metallidurans)).